Here is a 341-residue protein sequence, read N- to C-terminus: Phosphoribosylformylglycinamidine cyclo-ligase (341 aa).

This sequence belongs to the AIR synthase family.

The protein localises to the cytoplasm. The enzyme catalyses 2-formamido-N(1)-(5-O-phospho-beta-D-ribosyl)acetamidine + ATP = 5-amino-1-(5-phospho-beta-D-ribosyl)imidazole + ADP + phosphate + H(+). It functions in the pathway purine metabolism; IMP biosynthesis via de novo pathway; 5-amino-1-(5-phospho-D-ribosyl)imidazole from N(2)-formyl-N(1)-(5-phospho-D-ribosyl)glycinamide: step 2/2. This is Phosphoribosylformylglycinamidine cyclo-ligase from Xanthomonas oryzae pv. oryzae (strain MAFF 311018).